A 100-amino-acid polypeptide reads, in one-letter code: Urease subunit gamma (100 aa).

It belongs to the urease gamma subunit family. As to quaternary structure, heterotrimer of UreA (gamma), UreB (beta) and UreC (alpha) subunits. Three heterotrimers associate to form the active enzyme.

The protein localises to the cytoplasm. It catalyses the reaction urea + 2 H2O + H(+) = hydrogencarbonate + 2 NH4(+). It functions in the pathway nitrogen metabolism; urea degradation; CO(2) and NH(3) from urea (urease route): step 1/1. This Variovorax paradoxus (strain S110) protein is Urease subunit gamma.